The chain runs to 931 residues: Isoleucine--tRNA ligase (931 aa).

A 'HIGH' region motif is present at residues 57-67 (PFANGNIHMGH). Glu556 provides a ligand contact to L-isoleucyl-5'-AMP. Residues 597–601 (KMSKS) carry the 'KMSKS' region motif. Lys600 lines the ATP pocket. 4 residues coordinate Zn(2+): Cys890, Cys893, Cys910, and Cys913.

Belongs to the class-I aminoacyl-tRNA synthetase family. IleS type 1 subfamily. Monomer. Zn(2+) is required as a cofactor.

The protein resides in the cytoplasm. The catalysed reaction is tRNA(Ile) + L-isoleucine + ATP = L-isoleucyl-tRNA(Ile) + AMP + diphosphate. Catalyzes the attachment of isoleucine to tRNA(Ile). As IleRS can inadvertently accommodate and process structurally similar amino acids such as valine, to avoid such errors it has two additional distinct tRNA(Ile)-dependent editing activities. One activity is designated as 'pretransfer' editing and involves the hydrolysis of activated Val-AMP. The other activity is designated 'posttransfer' editing and involves deacylation of mischarged Val-tRNA(Ile). The polypeptide is Isoleucine--tRNA ligase (Lactobacillus delbrueckii subsp. bulgaricus (strain ATCC BAA-365 / Lb-18)).